Here is a 262-residue protein sequence, read N- to C-terminus: 3-methyl-2-oxobutanoate hydroxymethyltransferase (262 aa).

2 residues coordinate Mg(2+): Asp-31 and Asp-70. Residues 31 to 32 (DS), Asp-70, and Lys-99 each bind 3-methyl-2-oxobutanoate. Glu-101 is a Mg(2+) binding site. Glu-168 serves as the catalytic Proton acceptor.

This sequence belongs to the PanB family. Homodecamer; pentamer of dimers. It depends on Mg(2+) as a cofactor.

The protein localises to the cytoplasm. It catalyses the reaction 3-methyl-2-oxobutanoate + (6R)-5,10-methylene-5,6,7,8-tetrahydrofolate + H2O = 2-dehydropantoate + (6S)-5,6,7,8-tetrahydrofolate. It functions in the pathway cofactor biosynthesis; coenzyme A biosynthesis. Functionally, catalyzes the reversible reaction in which hydroxymethyl group from 5,10-methylenetetrahydrofolate is transferred onto alpha-ketoisovalerate to form ketopantoate. This is 3-methyl-2-oxobutanoate hydroxymethyltransferase from Cenarchaeum symbiosum (strain A).